The sequence spans 172 residues: Translationally-controlled tumor protein homolog (172 aa).

In terms of domain architecture, TCTP spans 1–172; it reads MIIYKDCITE…FKDGLIIEKC (172 aa).

It belongs to the TCTP family.

The protein resides in the cytoplasm. Functionally, involved in calcium binding and microtubule stabilization. The chain is Translationally-controlled tumor protein homolog (tpt1) from Xenopus laevis (African clawed frog).